The sequence spans 291 residues: Stomatin-like protein 3 (291 aa).

The residue at position 7 (S7) is a Phosphoserine. The chain crosses the membrane as a helical; Signal-anchor for type III membrane protein span at residues 29-49; sequence WILFSLSFLLVIITFPISIWM. Over 50–291 the chain is Cytoplasmic; the sequence is CLKIIKEYER…DNHKKLPNKA (242 aa). S241 is subject to Phosphoserine.

Belongs to the band 7/mec-2 family. As to quaternary structure, homodimer. Interacts with PIEZO1 and PIEZO2.

It is found in the cell membrane. In terms of biological role, required for the function of many mechanoreceptors. Modulate mechanotransduction channels and acid-sensing ion channels (ASIC) proteins. Potentiates PIEZO1 and PIEZO2 function by increasing their sensitivity to mechanical stimulations. This Homo sapiens (Human) protein is Stomatin-like protein 3 (STOML3).